A 257-amino-acid polypeptide reads, in one-letter code: S-methyl-5'-thioadenosine phosphorylase (257 aa).

Phosphate is bound by residues S10, 50–51 (RH), and 83–84 (TA). M180 contacts substrate. A phosphate-binding site is contributed by T181. Substrate is bound at residue 204-206 (DYD).

It belongs to the PNP/MTAP phosphorylase family. MTAP subfamily. As to quaternary structure, homohexamer. Dimer of a homotrimer.

It carries out the reaction S-methyl-5'-thioadenosine + phosphate = 5-(methylsulfanyl)-alpha-D-ribose 1-phosphate + adenine. The enzyme catalyses adenosine + phosphate = alpha-D-ribose 1-phosphate + adenine. The protein operates within amino-acid biosynthesis; L-methionine biosynthesis via salvage pathway; S-methyl-5-thio-alpha-D-ribose 1-phosphate from S-methyl-5'-thioadenosine (phosphorylase route): step 1/1. Functionally, catalyzes the reversible phosphorylation of S-methyl-5'-thioadenosine (MTA) to adenine and 5-methylthioribose-1-phosphate. Involved in the breakdown of MTA, a major by-product of polyamine biosynthesis. Responsible for the first step in the methionine salvage pathway after MTA has been generated from S-adenosylmethionine. Has broad substrate specificity with 6-aminopurine nucleosides as preferred substrates. Can also use adenosine as substrate to form ribose 1-phosphate. This chain is S-methyl-5'-thioadenosine phosphorylase, found in Thermococcus kodakarensis (strain ATCC BAA-918 / JCM 12380 / KOD1) (Pyrococcus kodakaraensis (strain KOD1)).